The sequence spans 310 residues: MPQRHSKNNNDLAYFTYDEKKKLGYGTQRERLGRDSIKPFDACSLCLKPFIDPMCCHKGHVFCRECILECFLAQKKDIQRRLAAHSSQKKQDKDEEEERLMLQKARELDEFDQQNHSAMPRNSDKNHNEDKNGFHGANSVKTTSFEEEALRTMKAFWLPSATPAASVRVDAPETHTVCPEGKEKLKLKNLFAIRFTEDNSEEEETKTKSASSSSYDKSYICPSCKVTLTNTMSLVALSSCGHVFCKKCAEKFMPVDKVCLVCDKPCKDRNLVGLKKGGTGFAEHDDHLEAKEYKHLGSGSGLGLVRPVKT.

An RING-type 1; degenerate zinc finger spans residues 43–67; the sequence is CSLCLKPFIDPMCCHKGHVFCRECI. Residues 75–95 adopt a coiled-coil conformation; that stretch reads KKDIQRRLAAHSSQKKQDKDE. The interval 110–138 is disordered; it reads EFDQQNHSAMPRNSDKNHNEDKNGFHGAN. The segment covering 122-133 has biased composition (basic and acidic residues); that stretch reads NSDKNHNEDKNG. The segment at 221 to 263 adopts an RING-type 2 zinc-finger fold; that stretch reads CPSCKVTLTNTMSLVALSSCGHVFCKKCAEKFMPVDKVCLVCD.

This sequence belongs to the NOSIP family.

Its subcellular location is the nucleus. The protein resides in the nucleus speckle. It carries out the reaction S-ubiquitinyl-[E2 ubiquitin-conjugating enzyme]-L-cysteine + [acceptor protein]-L-lysine = [E2 ubiquitin-conjugating enzyme]-L-cysteine + N(6)-ubiquitinyl-[acceptor protein]-L-lysine.. The protein operates within protein modification; protein ubiquitination. RING-finger E3 ubiquitin-protein ligase that plays an major role in maintaining COP1 homeostasis in darkness. Negatively regulates COP1 protein accumulation by targeting COP1 for ubiquitination and subsequent proteasomal degradation in dark-grown seedlings. Negatively regulates the accumulation of SPA1 protein in the dark. In Arabidopsis thaliana (Mouse-ear cress), this protein is E3 ubiquitin-protein ligase CSU1.